The chain runs to 284 residues: 2-dehydro-3-deoxyphosphooctonate aldolase (284 aa).

The protein belongs to the KdsA family.

It is found in the cytoplasm. It carries out the reaction D-arabinose 5-phosphate + phosphoenolpyruvate + H2O = 3-deoxy-alpha-D-manno-2-octulosonate-8-phosphate + phosphate. The protein operates within carbohydrate biosynthesis; 3-deoxy-D-manno-octulosonate biosynthesis; 3-deoxy-D-manno-octulosonate from D-ribulose 5-phosphate: step 2/3. It participates in bacterial outer membrane biogenesis; lipopolysaccharide biosynthesis. In Methylobacterium radiotolerans (strain ATCC 27329 / DSM 1819 / JCM 2831 / NBRC 15690 / NCIMB 10815 / 0-1), this protein is 2-dehydro-3-deoxyphosphooctonate aldolase.